A 767-amino-acid polypeptide reads, in one-letter code: AMP deaminase 3 (767 aa).

Phosphoserine occurs at positions 85 and 107. Disordered regions lie at residues 89-111 (QMPP…PTTP) and 181-205 (LGHP…PLPQ). His-317 and His-319 together coordinate Zn(2+). Substrate-binding positions include His-319 and 388-393 (KFNSKY). His-586 is a binding site for Zn(2+). Glu-589 contacts substrate. His-608 acts as the Proton acceptor in catalysis. Asp-663 contacts Zn(2+). A substrate-binding site is contributed by 664–667 (DPMQ).

Belongs to the metallo-dependent hydrolases superfamily. Adenosine and AMP deaminases family. As to quaternary structure, homotetramer. Requires Zn(2+) as cofactor.

It catalyses the reaction AMP + H2O + H(+) = IMP + NH4(+). It functions in the pathway purine metabolism; IMP biosynthesis via salvage pathway; IMP from AMP: step 1/1. In terms of biological role, AMP deaminase plays a critical role in energy metabolism. In Homo sapiens (Human), this protein is AMP deaminase 3.